Reading from the N-terminus, the 105-residue chain is Large ribosomal subunit protein uL24 (105 aa).

Belongs to the universal ribosomal protein uL24 family. As to quaternary structure, part of the 50S ribosomal subunit.

In terms of biological role, one of two assembly initiator proteins, it binds directly to the 5'-end of the 23S rRNA, where it nucleates assembly of the 50S subunit. Its function is as follows. One of the proteins that surrounds the polypeptide exit tunnel on the outside of the subunit. This chain is Large ribosomal subunit protein uL24, found in Rhodospirillum centenum (strain ATCC 51521 / SW).